The chain runs to 481 residues: MPAVMIQGTGSDVGKSLLVAGLCRAARRRGLSVAPFKPQNMSNNAAVTADGGEIGRAQALQARAAGLEPMTDMNPVLLKPESDQGSQVIVQGRRVGTLRARDWFERKPSLMAPVLESFGRLTAAHDLVIVEGAGSPAEVNLRRGDIANMGFARAANVPVVLAGDIDRGGVIAQIVGTQAVIDPEDAAMVAGFLVNKFRGDVRLFDEGYRLIEDRTGWRGYGVVPFFPQAALLPAEDALDLGRPTGQGALTVAWLAFSRVANFDDLDPLKQEPGLTVVMVRPGQPIPAEAGLVILPGTKSTRGDLAFLRAQGWDVDLLAHHRRGGRVLGICGGYQMLGRTVADPQGLEGEPGATEGLGLLDVTTVMHPDKRLTRVEGRHVASGEPLSGYEIHIGATDGPDCARPFAEVDGRPEGAGSPDGRVTGSYLHGMFGSDRFRAAFLRSLGARTSDLAYDARVETVLDSLADHLEAHLDVAGLLALAR.

One can recognise a GATase cobBQ-type domain in the interval 248 to 435 (ALTVAWLAFS…LHGMFGSDRF (188 aa)). Cys330 functions as the Nucleophile in the catalytic mechanism. His427 is an active-site residue.

Belongs to the CobB/CobQ family. CobQ subfamily.

It functions in the pathway cofactor biosynthesis; adenosylcobalamin biosynthesis. Functionally, catalyzes amidations at positions B, D, E, and G on adenosylcobyrinic A,C-diamide. NH(2) groups are provided by glutamine, and one molecule of ATP is hydrogenolyzed for each amidation. This Cereibacter sphaeroides (strain ATCC 17025 / ATH 2.4.3) (Rhodobacter sphaeroides) protein is Cobyric acid synthase.